The sequence spans 495 residues: Serine/threonine-protein kinase F (495 aa).

Positions Y46–L314 constitute a Protein kinase domain. Residues L52 to A60 and K77 each bind ATP. D187 serves as the catalytic Proton acceptor. Residues G316 to P354 are disordered. Polar residues predominate over residues T329–P350.

This sequence belongs to the protein kinase superfamily. Ser/Thr protein kinase family.

It carries out the reaction L-seryl-[protein] + ATP = O-phospho-L-seryl-[protein] + ADP + H(+). It catalyses the reaction L-threonyl-[protein] + ATP = O-phospho-L-threonyl-[protein] + ADP + H(+). The protein is Serine/threonine-protein kinase F (spkF) of Synechocystis sp. (strain ATCC 27184 / PCC 6803 / Kazusa).